The primary structure comprises 475 residues: tRNA-2-methylthio-N(6)-dimethylallyladenosine synthase (475 aa).

Residues 2 to 119 (AKLHITTWGC…LPEMINKIRG (118 aa)) form the MTTase N-terminal domain. 6 residues coordinate [4Fe-4S] cluster: cysteine 11, cysteine 48, cysteine 82, cysteine 156, cysteine 160, and cysteine 163. The 233-residue stretch at 142–374 (RAEGPTAFVS…QQRINHQAMQ (233 aa)) folds into the Radical SAM core domain. The TRAM domain maps to 377-440 (RAMLGTEQRV…TNSLRGDVVR (64 aa)).

It belongs to the methylthiotransferase family. MiaB subfamily. Monomer. It depends on [4Fe-4S] cluster as a cofactor.

Its subcellular location is the cytoplasm. It carries out the reaction N(6)-dimethylallyladenosine(37) in tRNA + (sulfur carrier)-SH + AH2 + 2 S-adenosyl-L-methionine = 2-methylsulfanyl-N(6)-dimethylallyladenosine(37) in tRNA + (sulfur carrier)-H + 5'-deoxyadenosine + L-methionine + A + S-adenosyl-L-homocysteine + 2 H(+). In terms of biological role, catalyzes the methylthiolation of N6-(dimethylallyl)adenosine (i(6)A), leading to the formation of 2-methylthio-N6-(dimethylallyl)adenosine (ms(2)i(6)A) at position 37 in tRNAs that read codons beginning with uridine. The chain is tRNA-2-methylthio-N(6)-dimethylallyladenosine synthase from Actinobacillus pleuropneumoniae serotype 5b (strain L20).